The following is a 624-amino-acid chain: Threonine--tRNA ligase (624 aa).

The segment at 1–143 (MRLLFIHADE…SRTVTPEAAE (143 aa)) is editing domain. A catalytic region spans residues 197-499 (AHVKLMREKE…EQEGKLPTLP (303 aa)). Residues C289, H340, and H467 each coordinate Zn(2+). The disordered stretch occupies residues 598–624 (LERETEGKPRVPLTIPDRLSRRPRFGR).

It belongs to the class-II aminoacyl-tRNA synthetase family. Homodimer. The cofactor is Zn(2+).

The protein resides in the cytoplasm. The enzyme catalyses tRNA(Thr) + L-threonine + ATP = L-threonyl-tRNA(Thr) + AMP + diphosphate + H(+). In terms of biological role, catalyzes the attachment of threonine to tRNA(Thr) in a two-step reaction: L-threonine is first activated by ATP to form Thr-AMP and then transferred to the acceptor end of tRNA(Thr). Also edits incorrectly charged L-seryl-tRNA(Thr). In Methanopyrus kandleri (strain AV19 / DSM 6324 / JCM 9639 / NBRC 100938), this protein is Threonine--tRNA ligase.